Consider the following 198-residue polypeptide: FMN-dependent NADH:quinone oxidoreductase (198 aa).

FMN is bound by residues Ser10, 16 to 18 (SQS), 94 to 97 (MYNF), and 138 to 141 (TRGG).

This sequence belongs to the azoreductase type 1 family. In terms of assembly, homodimer. The cofactor is FMN.

The catalysed reaction is 2 a quinone + NADH + H(+) = 2 a 1,4-benzosemiquinone + NAD(+). The enzyme catalyses N,N-dimethyl-1,4-phenylenediamine + anthranilate + 2 NAD(+) = 2-(4-dimethylaminophenyl)diazenylbenzoate + 2 NADH + 2 H(+). Functionally, quinone reductase that provides resistance to thiol-specific stress caused by electrophilic quinones. In terms of biological role, also exhibits azoreductase activity. Catalyzes the reductive cleavage of the azo bond in aromatic azo compounds to the corresponding amines. In Shewanella sp. (strain MR-4), this protein is FMN-dependent NADH:quinone oxidoreductase.